Reading from the N-terminus, the 186-residue chain is KERAMHVGRKKGQIVDTVVQEQRPSVLLELGAYCGYSAVRMARLLLPSARLLTIELNPDNAAIAQQVVDFAGLQDRVTVVVGASQDIIPQLKKKYDVDTLDMVFLDHWKDRYLPDTLLLEECGLLRKGTVLLADNVICPGAPDFLAHVRGCGRFECTHFSSYLEYSQMVDGLEKAVYKGPGSPAQP.

Residues Val7, Glu29, Ser37, Glu55, Leu56, Gly82–Gln85, Ser84, and Asp106 each bind S-adenosyl-L-methionine. Mg(2+) is bound at residue Asp106. Lys109 lines the substrate pocket. Asp134 and Asn135 together coordinate Mg(2+). The substrate site is built by Asn135 and Glu164. Ser182 carries the phosphoserine modification.

It belongs to the class I-like SAM-binding methyltransferase superfamily. Cation-dependent O-methyltransferase family. Mg(2+) is required as a cofactor.

It is found in the cytoplasm. The protein localises to the cell membrane. The catalysed reaction is a catechol + S-adenosyl-L-methionine = a guaiacol + S-adenosyl-L-homocysteine + H(+). It catalyses the reaction 2-hydroxyestrone + S-adenosyl-L-methionine = 2-hydroxy-3-methoxy-estrone + S-adenosyl-L-homocysteine + H(+). The enzyme catalyses 4-hydroxyestrone + S-adenosyl-L-methionine = 4-methoxyestrone + S-adenosyl-L-homocysteine + H(+). It carries out the reaction 2-hydroxyestrone + S-adenosyl-L-methionine = 2-methoxyestrone + S-adenosyl-L-homocysteine + H(+). The catalysed reaction is 4-hydroxy-17beta-estradiol + S-adenosyl-L-methionine = 4-methoxy-17beta-estradiol + S-adenosyl-L-homocysteine + H(+). It catalyses the reaction 2-hydroxy-17beta-estradiol + S-adenosyl-L-methionine = 2-hydroxy-3-methoxy-17beta-estradiol + S-adenosyl-L-homocysteine + H(+). The enzyme catalyses 2-hydroxy-17beta-estradiol + S-adenosyl-L-methionine = 2-methoxy-17beta-estradiol + S-adenosyl-L-homocysteine + H(+). Its function is as follows. Catalyzes the O-methylation, and thereby the inactivation, of catecholamine neurotransmitters and catechol hormones. Also shortens the biological half-lives of certain neuroactive drugs, like L-DOPA, alpha-methyl DOPA and isoproterenol. The sequence is that of Catechol O-methyltransferase (COMT) from Sus scrofa (Pig).